Consider the following 161-residue polypeptide: Endoribonuclease YbeY (161 aa).

Zn(2+) contacts are provided by histidine 120, histidine 124, and aspartate 130.

It belongs to the endoribonuclease YbeY family. Requires Zn(2+) as cofactor.

Its subcellular location is the cytoplasm. Functionally, single strand-specific metallo-endoribonuclease involved in late-stage 70S ribosome quality control and in maturation of the 3' terminus of the 16S rRNA. The chain is Endoribonuclease YbeY from Chlamydia muridarum (strain MoPn / Nigg).